The sequence spans 182 residues: Transcription termination/antitermination protein NusG (182 aa).

The region spanning 131 to 163 is the KOW domain; sequence VGEQVRIKSGPFANQVGEVQEIETDKFKLTVLV.

The protein belongs to the NusG family.

Its function is as follows. Participates in transcription elongation, termination and antitermination. The sequence is that of Transcription termination/antitermination protein NusG from Staphylococcus aureus (strain NCTC 8325 / PS 47).